Consider the following 254-residue polypeptide: Decaprenylphosphoryl-2-keto-beta-D-erythro-pentose reductase (254 aa).

D67 is an NAD(+) binding site. The active-site Proton acceptor is the Y160. K164 provides a ligand contact to NAD(+).

This sequence belongs to the short-chain dehydrogenases/reductases (SDR) family. As to quaternary structure, interacts with DprE1 to form an epimerase complex.

The protein localises to the periplasm. The enzyme catalyses trans,octa-cis-decaprenylphospho-beta-D-arabinofuranose + NAD(+) = trans,octa-cis-decaprenylphospho-beta-D-erythro-pentofuranosid-2-ulose + NADH + H(+). It participates in cell wall biogenesis; cell wall polysaccharide biosynthesis. Functionally, component of the DprE1-DprE2 complex that catalyzes the 2-step epimerization of decaprenyl-phospho-ribose (DPR) to decaprenyl-phospho-arabinose (DPA), a key precursor that serves as the arabinose donor required for the synthesis of cell-wall arabinans. DprE1 catalyzes the first step of epimerization, namely FAD-dependent oxidation of the C2' hydroxyl of DPR to yield the keto intermediate decaprenyl-phospho-2'-keto-D-arabinose (DPX). The intermediate DPX is then transferred to DprE2 subunit of the epimerase complex, most probably through a 'substrate channel' at the interface of DprE1-DprE2 complex. DprE2 then catalyzes the second step of epimerization, the NAD(+)-dependent reduction of DPX that leads to the formation of DPA. This is Decaprenylphosphoryl-2-keto-beta-D-erythro-pentose reductase from Mycolicibacterium smegmatis (strain ATCC 700084 / mc(2)155) (Mycobacterium smegmatis).